The following is a 957-amino-acid chain: Glycine dehydrogenase (decarboxylating) (957 aa).

The residue at position 708 (Lys708) is an N6-(pyridoxal phosphate)lysine.

This sequence belongs to the GcvP family. As to quaternary structure, the glycine cleavage system is composed of four proteins: P, T, L and H. Pyridoxal 5'-phosphate serves as cofactor.

The enzyme catalyses N(6)-[(R)-lipoyl]-L-lysyl-[glycine-cleavage complex H protein] + glycine + H(+) = N(6)-[(R)-S(8)-aminomethyldihydrolipoyl]-L-lysyl-[glycine-cleavage complex H protein] + CO2. Its function is as follows. The glycine cleavage system catalyzes the degradation of glycine. The P protein binds the alpha-amino group of glycine through its pyridoxal phosphate cofactor; CO(2) is released and the remaining methylamine moiety is then transferred to the lipoamide cofactor of the H protein. This chain is Glycine dehydrogenase (decarboxylating), found in Escherichia fergusonii (strain ATCC 35469 / DSM 13698 / CCUG 18766 / IAM 14443 / JCM 21226 / LMG 7866 / NBRC 102419 / NCTC 12128 / CDC 0568-73).